Reading from the N-terminus, the 228-residue chain is Cytidylate kinase (228 aa).

Residue 7 to 15 participates in ATP binding; sequence GPVATGKST.

This sequence belongs to the cytidylate kinase family. Type 1 subfamily.

Its subcellular location is the cytoplasm. The catalysed reaction is CMP + ATP = CDP + ADP. It catalyses the reaction dCMP + ATP = dCDP + ADP. The sequence is that of Cytidylate kinase from Protochlamydia amoebophila (strain UWE25).